Reading from the N-terminus, the 808-residue chain is Phenylalanine--tRNA ligase beta subunit (808 aa).

The region spanning 40-149 is the tRNA-binding domain; sequence RPELDFVKIV…DQAEVGKTIR (110 aa). In terms of domain architecture, B5 spans 407 to 484; the sequence is HKEVRIHTDI…RTKGYDTIQV (78 aa). Aspartate 462, aspartate 468, glutamate 471, and glutamate 472 together coordinate Mg(2+). An FDX-ACB domain is found at 716–808; it reads SQFPEAEIDL…LAGKNGFVLR (93 aa).

It belongs to the phenylalanyl-tRNA synthetase beta subunit family. Type 1 subfamily. In terms of assembly, tetramer of two alpha and two beta subunits. It depends on Mg(2+) as a cofactor.

Its subcellular location is the cytoplasm. It catalyses the reaction tRNA(Phe) + L-phenylalanine + ATP = L-phenylalanyl-tRNA(Phe) + AMP + diphosphate + H(+). The chain is Phenylalanine--tRNA ligase beta subunit from Leptospira interrogans serogroup Icterohaemorrhagiae serovar Lai (strain 56601).